A 27-amino-acid polypeptide reads, in one-letter code: ADDKNPLEEAFREADYEVFLEIAKNGL.

As to quaternary structure, homodimer; non-covalently linked. It depends on FAD as a cofactor. In terms of processing, contains 2 disulfide bonds. N-glycosylated. Expressed by the venom gland.

It localises to the secreted. It catalyses the reaction an L-alpha-amino acid + O2 + H2O = a 2-oxocarboxylate + H2O2 + NH4(+). It carries out the reaction L-leucine + O2 + H2O = 4-methyl-2-oxopentanoate + H2O2 + NH4(+). Its function is as follows. Catalyzes an oxidative deamination of predominantly hydrophobic and aromatic L-amino acids, thus producing hydrogen peroxide that may contribute to the diverse toxic effects of this enzyme. Shows activity on L-Leu. Exhibits diverse biological activities, such as hemolysis, edema, apoptosis, as well as induction of platelet aggregation. Effects of snake L-amino oxidases on platelets are controversial, since they either induce aggregation or inhibit agonist-induced aggregation. These different effects are probably due to different experimental conditions. Unlike other snake venom L-amino acid oxidases, does not induce hemorrhage. This protein may also have antibacterial and antiparasitic activities. This is L-amino-acid oxidase from Eristicophis macmahoni (Leaf-nosed viper).